Reading from the N-terminus, the 1368-residue chain is Protein suppressor 2 of zeste (1368 aa).

The RING-type zinc finger occupies 35–74 (CRLCRGYMIDPTTVDYCYHTYCRSCILKHLLRAVYCPECK). Disordered regions lie at residues 245-321 (SRIN…FKSL), 448-628 (QPLQ…QQQQ), 640-718 (TLPT…AVPQ), 861-903 (AGGK…KRSC), 935-1001 (ALSG…NGTA), 1057-1103 (SANP…STSN), 1116-1141 (ISAN…GDDL), 1161-1193 (AASS…ASVR), 1211-1271 (STAA…KKPT), and 1298-1322 (VLSS…RPEP). A compositionally biased stretch (polar residues) spans 449–461 (PLQQSASNPDSKY). Positions 462–495 (SPNASPMSSCSSSTNGSSSSLGTADASTSTSTSS) are enriched in low complexity. Basic residues predominate over residues 496–506 (SHRKRKKKHSK). Composition is skewed to low complexity over residues 599–628 (AEPE…QQQQ) and 672–689 (PKQQ…VLQQ). Polar residues-rich tracts occupy residues 936-953 (LSGQ…NAYR) and 962-977 (LRNT…SKSS). Composition is skewed to low complexity over residues 1078–1099 (NNNN…NNNN), 1119–1138 (NSNG…TTNG), 1161–1183 (AASS…NANA), and 1231–1263 (STSN…ATSP).

It localises to the nucleus. In terms of biological role, regulates expression of the homeotic selector genes by influencing higher-order chromatin structure through interaction with other proteins. This Drosophila melanogaster (Fruit fly) protein is Protein suppressor 2 of zeste (Su(z)2).